Reading from the N-terminus, the 184-residue chain is Outer-membrane lipoprotein carrier protein (184 aa).

An N-terminal signal peptide occupies residues 1-19 (MRAFLKILMVLIFMSVAYA).

It belongs to the LolA family. Monomer.

It is found in the periplasm. Participates in the translocation of lipoproteins from the inner membrane to the outer membrane. Only forms a complex with a lipoprotein if the residue after the N-terminal Cys is not an aspartate (The Asp acts as a targeting signal to indicate that the lipoprotein should stay in the inner membrane). This chain is Outer-membrane lipoprotein carrier protein, found in Helicobacter pylori (strain HPAG1).